The following is a 1080-amino-acid chain: uncharacterized protein (1080 aa).

A signal peptide spans 1–17; it reads MHKLLVIIAHIIVCAYA. Residues 18-1042 are Extracellular-facing; the sequence is DFTGFDNEAG…KSLDLEMIGK (1025 aa). Asparagine 439, asparagine 664, and asparagine 875 each carry an N-linked (GlcNAc...) asparagine; by host glycan. A helical transmembrane segment spans residues 1043-1063; sequence IILLIAFVIVFVILLTIGIIT. The Cytoplasmic portion of the chain corresponds to 1064 to 1080; sequence LVKRHRETLPEDEYLLP.

Its subcellular location is the host membrane. This is an uncharacterized protein from Ostreid herpesvirus 1 (isolate France) (OsHV-1).